The chain runs to 213 residues: Superoxide dismutase [Fe] (213 aa).

Fe cation is bound by residues histidine 28, histidine 82, aspartate 164, and histidine 168.

Belongs to the iron/manganese superoxide dismutase family. Homotetramer. Fe cation serves as cofactor.

The catalysed reaction is 2 superoxide + 2 H(+) = H2O2 + O2. In terms of biological role, destroys superoxide anion radicals which are normally produced within the cells and which are toxic to biological systems. The polypeptide is Superoxide dismutase [Fe] (sodB) (Aquifex aeolicus (strain VF5)).